A 612-amino-acid chain; its full sequence is Isocitrate dehydrogenase kinase/phosphatase (612 aa).

ATP is bound by residues 327–333 (APGIKGL) and K348. D383 is a catalytic residue. The tract at residues 593-612 (AGAASNEQDAPDAGRSVRAA) is disordered.

Belongs to the AceK family.

It is found in the cytoplasm. The catalysed reaction is L-seryl-[isocitrate dehydrogenase] + ATP = O-phospho-L-seryl-[isocitrate dehydrogenase] + ADP + H(+). In terms of biological role, bifunctional enzyme which can phosphorylate or dephosphorylate isocitrate dehydrogenase (IDH) on a specific serine residue. This is a regulatory mechanism which enables bacteria to bypass the Krebs cycle via the glyoxylate shunt in response to the source of carbon. When bacteria are grown on glucose, IDH is fully active and unphosphorylated, but when grown on acetate or ethanol, the activity of IDH declines drastically concomitant with its phosphorylation. In Paraburkholderia xenovorans (strain LB400), this protein is Isocitrate dehydrogenase kinase/phosphatase.